The following is a 360-amino-acid chain: DNA replication and repair protein RecF (360 aa).

Residue 30–37 (GENGAGKT) coordinates ATP.

The protein belongs to the RecF family.

It is found in the cytoplasm. In terms of biological role, the RecF protein is involved in DNA metabolism; it is required for DNA replication and normal SOS inducibility. RecF binds preferentially to single-stranded, linear DNA. It also seems to bind ATP. This Deinococcus deserti (strain DSM 17065 / CIP 109153 / LMG 22923 / VCD115) protein is DNA replication and repair protein RecF.